The primary structure comprises 232 residues: DQGAGVTYLEPTGSQIGHKESIKDTARVLGRMYDGIEYRGFGQEIVEELAQYAGVPVFNGLTNEFHPTQMLADALTMREHSSKPLNEIAFAYVGDARFNMGNSLLLLGAKMGMDVRIGAPKALWPSENIIAQARALAEETGAKVTLTENAEEAVQGVDFIHTDVWVSMGEPKETWEERIALLKSFRVTPELMAASGNPNVKFMHCLPAFHNRETKVGEWIYETFGLNGVEVT.

Residues Gln-15, Arg-39, and His-66 to Gln-69 each bind carbamoyl phosphate. L-ornithine is bound by residues Asn-99, Asp-163, and Ser-167–Met-168. Carbamoyl phosphate contacts are provided by residues His-204–Pro-207 and Thr-232.

Belongs to the aspartate/ornithine carbamoyltransferase superfamily. OTCase family.

Its subcellular location is the cytoplasm. It catalyses the reaction carbamoyl phosphate + L-ornithine = L-citrulline + phosphate + H(+). It functions in the pathway amino-acid biosynthesis; L-arginine biosynthesis; L-arginine from L-ornithine and carbamoyl phosphate: step 1/3. This chain is Ornithine carbamoyltransferase (argF), found in Neisseria animalis.